Here is a 343-residue protein sequence, read N- to C-terminus: L-threonine 3-dehydrogenase (343 aa).

C38 is a binding site for Zn(2+). Residues T40 and H43 each act as charge relay system in the active site. Zn(2+) contacts are provided by H63, E64, C93, C96, C99, and C107. Residues I175, D195, R200, 262–264, and 286–287 each bind NAD(+); these read LGI and IY.

It belongs to the zinc-containing alcohol dehydrogenase family. Homotetramer. The cofactor is Zn(2+).

The protein localises to the cytoplasm. It carries out the reaction L-threonine + NAD(+) = (2S)-2-amino-3-oxobutanoate + NADH + H(+). It functions in the pathway amino-acid degradation; L-threonine degradation via oxydo-reductase pathway; glycine from L-threonine: step 1/2. Its function is as follows. Catalyzes the NAD(+)-dependent oxidation of L-threonine to 2-amino-3-ketobutyrate. This is L-threonine 3-dehydrogenase from Paraburkholderia xenovorans (strain LB400).